The primary structure comprises 327 residues: MFNETPVFDYEDIQLIPNKCIINSRSEADTTVTLGKYSFKLPVVPANMQTIIDEDVAEMLAKDGYFYIMHRFDEAGRIPFIKRMHEQGLIASISVGVKEYEYEFVTSLKADAPEFITIDIAHGHAESVIKMIQHIKKELPETFVIAGNVGTPEAVRELENAGADATKVGIGPGKVCITKVKTGFGTGGWQLAALRWCAKAARKPIIADGGIRTHGDIAKSIRFGASMVMIGSLFAGHIESPGKTIEVDGEKFKEYYGSASEYQKGAYKNVEGKKILLPAKGHLKDTLVEMEQDLQSSISYAGGRDITSLKHVDYVIVKNSIWNGDSI.

Cys176 serves as the catalytic Thioimidate intermediate. 205–228 lines the NADP(+) pocket; that stretch reads IIADGGIRTHGDIAKSIRFGASMV.

This sequence belongs to the IMPDH/GMPR family. GuaC type 2 subfamily.

It catalyses the reaction IMP + NH4(+) + NADP(+) = GMP + NADPH + 2 H(+). Functionally, catalyzes the irreversible NADPH-dependent deamination of GMP to IMP. It functions in the conversion of nucleobase, nucleoside and nucleotide derivatives of G to A nucleotides, and in maintaining the intracellular balance of A and G nucleotides. The protein is GMP reductase of Streptococcus suis (strain 98HAH33).